We begin with the raw amino-acid sequence, 340 residues long: Guanine nucleotide-binding protein G(I)/G(S)/G(T) subunit beta-3 (340 aa).

WD repeat units follow at residues 53-83, 95-125, 141-170, 182-212, 224-254, 268-298, and 310-340; these read GHLAKIYAMHWATDSKLLVSASQDGKLIVWD, LRSSWVMTCAYAPSGNFVACGGLDNMCSIYN, AHTGYLSCCRFLDDNNIVTSSGDTTCALWD, GHTGDCMSLAVSPDFNLFISGACDASAKLWD, GHESDINAICFFPNGEAICTGSDDASCRLFD, SIICGITSVAFSLSGRLLFAGYDDFNCNVWD, and GHDNRVSCLGVTADGMAVATGSWDSFLKIWN.

Belongs to the WD repeat G protein beta family. As to quaternary structure, g proteins are composed of 3 units, alpha, beta and gamma. Interacts with RASD2.

In terms of biological role, guanine nucleotide-binding proteins (G proteins) are involved as a modulator or transducer in various transmembrane signaling systems. The beta and gamma chains are required for the GTPase activity, for replacement of GDP by GTP, and for G protein-effector interaction. This chain is Guanine nucleotide-binding protein G(I)/G(S)/G(T) subunit beta-3 (GNB3), found in Homo sapiens (Human).